The sequence spans 245 residues: Fumarate reductase iron-sulfur subunit (245 aa).

The 82-residue stretch at 17–98 (PQSAVNKPHF…NGVITLMPMP (82 aa)) folds into the 2Fe-2S ferredoxin-type domain. [2Fe-2S] cluster contacts are provided by cysteine 60, cysteine 65, cysteine 68, and cysteine 80. The 4Fe-4S ferredoxin-type domain maps to 145–174 (AQEVFELDRCIECGCCIASCGTKLMRPNFI). Positions 154, 157, and 160 each coordinate [4Fe-4S] cluster. Residues cysteine 164, cysteine 211, and cysteine 217 each coordinate [3Fe-4S] cluster. Cysteine 221 is a binding site for [4Fe-4S] cluster.

Belongs to the succinate dehydrogenase/fumarate reductase iron-sulfur protein family. Part of an enzyme complex containing three subunits: a flavoprotein (frdA), an iron-sulfur protein (frdB), and diheme cytochrome b (frdC). Requires [2Fe-2S] cluster as cofactor. The cofactor is [3Fe-4S] cluster. It depends on [4Fe-4S] cluster as a cofactor.

The catalysed reaction is a menaquinone + succinate = a menaquinol + fumarate. The polypeptide is Fumarate reductase iron-sulfur subunit (frdB) (Helicobacter pylori (strain J99 / ATCC 700824) (Campylobacter pylori J99)).